Consider the following 81-residue polypeptide: Antimicrobial peptide D2 (81 aa).

The signal sequence occupies residues 1–31 (MAKTVLGIHVTFLTLLFAVILLNDVMYTPVE). 4 disulfide bridges follow: cysteine 34/cysteine 81, cysteine 45/cysteine 66, cysteine 51/cysteine 75, and cysteine 55/cysteine 77.

In terms of biological role, antimicrobial peptide probably active against fungi like B.sorokiniana, F.oxysporum, F.graminearum, F.avenaceum, B.cinerea, P.beta, P.infestans and P.debaryanum. The protein is Antimicrobial peptide D2 of Stellaria media (Common chickweed).